The following is a 350-amino-acid chain: tRNA N6-adenosine threonylcarbamoyltransferase (350 aa).

Fe cation is bound by residues His-109 and His-113. Substrate is bound by residues Thr-136–Gly-140, Asp-169, Gly-182, Asp-186, and Asn-284. Asp-312 contacts Fe cation.

It belongs to the KAE1 / TsaD family. Fe(2+) is required as a cofactor.

The protein resides in the cytoplasm. It carries out the reaction L-threonylcarbamoyladenylate + adenosine(37) in tRNA = N(6)-L-threonylcarbamoyladenosine(37) in tRNA + AMP + H(+). Required for the formation of a threonylcarbamoyl group on adenosine at position 37 (t(6)A37) in tRNAs that read codons beginning with adenine. Is involved in the transfer of the threonylcarbamoyl moiety of threonylcarbamoyl-AMP (TC-AMP) to the N6 group of A37, together with TsaE and TsaB. TsaD likely plays a direct catalytic role in this reaction. The polypeptide is tRNA N6-adenosine threonylcarbamoyltransferase (Pelodictyon phaeoclathratiforme (strain DSM 5477 / BU-1)).